We begin with the raw amino-acid sequence, 130 residues long: Small ribosomal subunit protein uS9 (130 aa).

It belongs to the universal ribosomal protein uS9 family.

The sequence is that of Small ribosomal subunit protein uS9 from Vibrio cholerae serotype O1 (strain ATCC 39541 / Classical Ogawa 395 / O395).